Consider the following 179-residue polypeptide: MNRLKEKFNTEVTENLMKKFNYSSVMEVPKIDKIVVNMGVGDAVQNSKVLDNAVEELELITGQKPLVTKAKKSIATFRLREGMPIGAKVTLRGERMYEFLDKLISVSLPRVRDFQGVSKKAFDGRGNYTLGVKEQLIFPEIDYDKVSKVRGMDIVIVTTANTDEEARELLANFGMPFRK.

Belongs to the universal ribosomal protein uL5 family. In terms of assembly, part of the 50S ribosomal subunit; part of the 5S rRNA/L5/L18/L25 subcomplex. Contacts the 5S rRNA and the P site tRNA. Forms a bridge to the 30S subunit in the 70S ribosome.

In terms of biological role, this is one of the proteins that bind and probably mediate the attachment of the 5S RNA into the large ribosomal subunit, where it forms part of the central protuberance. In the 70S ribosome it contacts protein S13 of the 30S subunit (bridge B1b), connecting the 2 subunits; this bridge is implicated in subunit movement. Contacts the P site tRNA; the 5S rRNA and some of its associated proteins might help stabilize positioning of ribosome-bound tRNAs. This chain is Large ribosomal subunit protein uL5, found in Staphylococcus aureus (strain MW2).